The chain runs to 325 residues: Acetyl-coenzyme A carboxylase carboxyl transferase subunit beta (325 aa).

The 270-residue stretch at 24-293 folds into the CoA carboxyltransferase N-terminal domain; it reads LWIKCPDSGH…AEIEVVTPEP (270 aa).

It belongs to the AccD/PCCB family. Acetyl-CoA carboxylase is a heterohexamer composed of biotin carboxyl carrier protein (AccB), biotin carboxylase (AccC) and two subunits each of ACCase subunit alpha (AccA) and ACCase subunit beta (AccD).

The protein resides in the cytoplasm. The catalysed reaction is N(6)-carboxybiotinyl-L-lysyl-[protein] + acetyl-CoA = N(6)-biotinyl-L-lysyl-[protein] + malonyl-CoA. The protein operates within lipid metabolism; malonyl-CoA biosynthesis; malonyl-CoA from acetyl-CoA: step 1/1. In terms of biological role, component of the acetyl coenzyme A carboxylase (ACC) complex. Biotin carboxylase (BC) catalyzes the carboxylation of biotin on its carrier protein (BCCP) and then the CO(2) group is transferred by the transcarboxylase to acetyl-CoA to form malonyl-CoA. The sequence is that of Acetyl-coenzyme A carboxylase carboxyl transferase subunit beta from Rhodopseudomonas palustris (strain BisA53).